The following is a 365-amino-acid chain: tRNA-specific 2-thiouridylase MnmA (365 aa).

ATP contacts are provided by residues 6–13 (AMSGGVDS) and Met-32. Cys-101 serves as the catalytic Nucleophile. Residues Cys-101 and Cys-199 are joined by a disulfide bond. Gly-125 serves as a coordination point for ATP. The tract at residues 148–150 (KDQ) is interaction with tRNA. The active-site Cysteine persulfide intermediate is the Cys-199.

It belongs to the MnmA/TRMU family.

Its subcellular location is the cytoplasm. The catalysed reaction is S-sulfanyl-L-cysteinyl-[protein] + uridine(34) in tRNA + AH2 + ATP = 2-thiouridine(34) in tRNA + L-cysteinyl-[protein] + A + AMP + diphosphate + H(+). Its function is as follows. Catalyzes the 2-thiolation of uridine at the wobble position (U34) of tRNA, leading to the formation of s(2)U34. This chain is tRNA-specific 2-thiouridylase MnmA, found in Kineococcus radiotolerans (strain ATCC BAA-149 / DSM 14245 / SRS30216).